The chain runs to 289 residues: tRNA dimethylallyltransferase (289 aa).

Gly9–Thr16 is a binding site for ATP. Substrate is bound at residue Thr11–Thr16. The segment at Asp34–Cys37 is interaction with substrate tRNA.

Belongs to the IPP transferase family. Monomer. Mg(2+) serves as cofactor.

It catalyses the reaction adenosine(37) in tRNA + dimethylallyl diphosphate = N(6)-dimethylallyladenosine(37) in tRNA + diphosphate. Functionally, catalyzes the transfer of a dimethylallyl group onto the adenine at position 37 in tRNAs that read codons beginning with uridine, leading to the formation of N6-(dimethylallyl)adenosine (i(6)A). In Campylobacter jejuni subsp. doylei (strain ATCC BAA-1458 / RM4099 / 269.97), this protein is tRNA dimethylallyltransferase.